The following is a 123-amino-acid chain: uncharacterized protein (123 aa).

Polar residues predominate over residues 1 to 12 (MALNNVSLSSGD). 2 disordered regions span residues 1 to 25 (MALN…SHGD) and 53 to 91 (PRQA…RFSP). The segment covering 61-82 (VRAESRRVDGGGRSPREPDGRG) has biased composition (basic and acidic residues).

This is an uncharacterized protein from Homo sapiens (Human).